We begin with the raw amino-acid sequence, 398 residues long: Tryptophan synthase beta chain (398 aa).

Residue lysine 92 is modified to N6-(pyridoxal phosphate)lysine.

It belongs to the TrpB family. In terms of assembly, tetramer of two alpha and two beta chains. Pyridoxal 5'-phosphate is required as a cofactor.

It carries out the reaction (1S,2R)-1-C-(indol-3-yl)glycerol 3-phosphate + L-serine = D-glyceraldehyde 3-phosphate + L-tryptophan + H2O. It functions in the pathway amino-acid biosynthesis; L-tryptophan biosynthesis; L-tryptophan from chorismate: step 5/5. Functionally, the beta subunit is responsible for the synthesis of L-tryptophan from indole and L-serine. In Nitrosospira multiformis (strain ATCC 25196 / NCIMB 11849 / C 71), this protein is Tryptophan synthase beta chain.